The chain runs to 33 residues: Photosystem II reaction center protein Psb30 (33 aa).

Residues 5 to 25 (VLAQLTVLTLIVISGPLVIAL) form a helical membrane-spanning segment.

This sequence belongs to the Psb30/Ycf12 family. PSII is composed of 1 copy each of membrane proteins PsbA, PsbB, PsbC, PsbD, PsbE, PsbF, PsbH, PsbI, PsbJ, PsbK, PsbL, PsbM, PsbT, PsbX, PsbY, PsbZ, Psb30/Ycf12, peripheral proteins of the oxygen-evolving complex and a large number of cofactors. It forms dimeric complexes.

The protein localises to the plastid. The protein resides in the chloroplast thylakoid membrane. Its function is as follows. A core subunit of photosystem II (PSII), probably helps stabilize the reaction center. This chain is Photosystem II reaction center protein Psb30, found in Cycas taitungensis (Prince sago).